The sequence spans 444 residues: Aflatoxin biosynthesis regulatory protein (444 aa).

Positions 1 to 25 (MVDHISPRASPGPIRSSQTRRARKL) are disordered. A DNA-binding region (zn(2)-C6 fungal-type) is located at residues 29–56 (CTSCASSKVRCTKEKPACARCIERGLAC). The disordered stretch occupies residues 64–174 (MGRNPRAPSP…AGQEQSTLSS (111 aa)). Over residues 106–116 (TQAHTHAHSHP) the composition is skewed to basic residues. Over residues 120–130 (PQSHPQSNQPP) the composition is skewed to low complexity. Positions 136-149 (PNGSSSVSAIFSHQ) are enriched in polar residues.

In terms of assembly, interacts with aflS.

Its subcellular location is the nucleus. Its function is as follows. Transcription factor; part of the gene cluster that mediates the biosynthesis of aflatoxin, a polyketide-derived furanocoumarin which is part of the most toxic and carcinogenic compounds among the known mycotoxins. Binds to at least 17 genes in the aflatoxin biosynthetic cluster, leading to the activation of an enzymatic cascade reaction that results in aflatoxin biosynthesis. Promoter regions of several biosynthesis genes are bound by aflR in a dimeric form with a 5'-TCG(N5)CGA-3' binding motif. AflR also recognizes 5'-TTAGGCCTAA-3' and 5'-TCGCAGCCCGG-3' binding sequences. AflR achieves its binding specificity through a mechanism in which either two copies of aflR or its complex with aflS bind to target sites on DNA in a highly cooperative manner. AflS acts as a modulator of aflR's DNA-binding by decreasing its DNA-binding affinity. In addition to aflatoxin biosynthesis, also plays a positive role in the fungal growth, spore germination, sclerotial development, and carbohydrate metabolism. The polypeptide is Aflatoxin biosynthesis regulatory protein (Aspergillus flavus (strain ATCC 200026 / FGSC A1120 / IAM 13836 / NRRL 3357 / JCM 12722 / SRRC 167)).